Reading from the N-terminus, the 188-residue chain is Elongation factor P (188 aa).

Belongs to the elongation factor P family.

Its subcellular location is the cytoplasm. It functions in the pathway protein biosynthesis; polypeptide chain elongation. In terms of biological role, involved in peptide bond synthesis. Stimulates efficient translation and peptide-bond synthesis on native or reconstituted 70S ribosomes in vitro. Probably functions indirectly by altering the affinity of the ribosome for aminoacyl-tRNA, thus increasing their reactivity as acceptors for peptidyl transferase. The protein is Elongation factor P of Saccharopolyspora erythraea (strain ATCC 11635 / DSM 40517 / JCM 4748 / NBRC 13426 / NCIMB 8594 / NRRL 2338).